The primary structure comprises 301 residues: Probable alpha-L-glutamate ligase (301 aa).

An ATP-grasp domain is found at 104–287 (LQLLSRKGIG…IAGMIIEYIE (184 aa)). Residues K141, 178–179 (EY), D187, and 211–213 (RSN) each bind ATP. Positions 248, 260, and 262 each coordinate Mg(2+). D248, E260, and N262 together coordinate Mn(2+).

This sequence belongs to the RimK family. The cofactor is Mg(2+). Mn(2+) serves as cofactor.

This Methanococcoides burtonii (strain DSM 6242 / NBRC 107633 / OCM 468 / ACE-M) protein is Probable alpha-L-glutamate ligase.